A 388-amino-acid polypeptide reads, in one-letter code: Lipid-A-disaccharide synthase (388 aa).

This sequence belongs to the LpxB family.

It catalyses the reaction a lipid X + a UDP-2-N,3-O-bis[(3R)-3-hydroxyacyl]-alpha-D-glucosamine = a lipid A disaccharide + UDP + H(+). It functions in the pathway bacterial outer membrane biogenesis; LPS lipid A biosynthesis. In terms of biological role, condensation of UDP-2,3-diacylglucosamine and 2,3-diacylglucosamine-1-phosphate to form lipid A disaccharide, a precursor of lipid A, a phosphorylated glycolipid that anchors the lipopolysaccharide to the outer membrane of the cell. In Burkholderia mallei (strain ATCC 23344), this protein is Lipid-A-disaccharide synthase.